The chain runs to 522 residues: BAR/IMD domain-containing adapter protein 2-like 2 (522 aa).

An IMD domain is found at 1–239; sequence MAPEMDQFYR…HSPGLLGPAL (239 aa). Disordered regions lie at residues 220 to 325 and 404 to 502; these read SEAS…GGGG and PMSP…GTNP. Serine 231, serine 272, and serine 303 each carry phosphoserine. Residues 297 to 317 are compositionally biased toward polar residues; the sequence is RTPSASSLYASSTQRSRSNSF. One can recognise an SH3 domain in the interval 324–387; it reads GGARRVRALV…PEAYVKPVEE (64 aa). Over residues 443 to 456 the composition is skewed to low complexity; that stretch reads SQSRSRTPSRVPSR. Positions 457 to 466 are enriched in pro residues; that stretch reads APSPAPPPLP. Serine 472 and serine 475 each carry phosphoserine.

Expressed in the epithelial layer of the intestine and in the kidney.

It is found in the cell membrane. The protein localises to the cell junction. It localises to the cytoplasmic vesicle membrane. In terms of biological role, phosphoinositides-binding protein that induces the formation of planar or gently curved membrane structures. Binds to phosphoinositides, including to phosphatidylinositol 4,5-bisphosphate (PtdIns(4,5)P2) headgroups. There seems to be no clear preference for a specific phosphoinositide. This Mus musculus (Mouse) protein is BAR/IMD domain-containing adapter protein 2-like 2 (Baiap2l2).